The following is a 293-amino-acid chain: Homoserine kinase (293 aa).

84 to 94 (PFSRGLGSSSS) contacts ATP.

This sequence belongs to the GHMP kinase family. Homoserine kinase subfamily.

It is found in the cytoplasm. The catalysed reaction is L-homoserine + ATP = O-phospho-L-homoserine + ADP + H(+). Its pathway is amino-acid biosynthesis; L-threonine biosynthesis; L-threonine from L-aspartate: step 4/5. Catalyzes the ATP-dependent phosphorylation of L-homoserine to L-homoserine phosphate. The sequence is that of Homoserine kinase from Campylobacter fetus subsp. fetus (strain 82-40).